A 1071-amino-acid polypeptide reads, in one-letter code: SLIT-ROBO Rho GTPase-activating protein 2 (1071 aa).

One can recognise an F-BAR domain in the interval 22–325 (KEIRAQLTEQ…AVENLDATSD (304 aa)). Over residues 181–203 (LKEAEKQEEKQIGKSVKQEDRQT) the composition is skewed to basic and acidic residues. Positions 181-211 (LKEAEKQEEKQIGKSVKQEDRQTPRSPDSTA) are disordered. Serine 206 is modified (phosphoserine). Positions 363–401 (QSELVQRCQQLQSRLSTLKIENEEVKKTMEATLQTIQDI) form a coiled coil. Residues serine 427, serine 500, serine 691, and serine 695 each carry the phosphoserine modification. The Rho-GAP domain maps to 489 to 679 (ARRSSTVRKQ…TIIIQHENIF (191 aa)). A disordered region spans residues 700 to 726 (CDSTHGETTSAEDSTQDVTAEHHTSDD). Over residues 705–717 (GETTSAEDSTQDV) the composition is skewed to polar residues. Serine 724 carries the phosphoserine modification. In terms of domain architecture, SH3 spans 728 to 787 (CEPIEAIAKFDYVGRTARELSFKKGASLLLYQRASDDWWEGRHNGIDGLIPHQYIVVQDT). At serine 795 the chain carries Phosphoserine. Disordered regions lie at residues 795–819 (SSPK…TGAS) and 838–918 (RKRP…DSPQ). Residues 855–868 (HGLGSSLTDSSSLG) are compositionally biased toward low complexity. 2 stretches are compositionally biased toward polar residues: residues 874 to 885 (RPSSQPIMSQNL) and 897 to 907 (GHGSLNSISRH). At serine 916 the chain carries Phosphoserine. Arginine 927 carries the post-translational modification Symmetric dimethylarginine; by PRMT5. Serine 930 bears the Phosphoserine mark. A coiled-coil region spans residues 940 to 968 (EVIAQDIEATMNSALNELQELERQSSAKH). Positions 984-1012 (PVVAPTSEPSSPLHTQLLKDPEPAFQRSA) are disordered. Serine 990, serine 994, serine 1013, and serine 1027 each carry phosphoserine. The interval 1029 to 1071 (KMAAPVKPPATRPKPTVFPKTNATSPGVNSSASPQATDKSCTV) is disordered. Positions 1047 to 1071 (PKTNATSPGVNSSASPQATDKSCTV) are enriched in polar residues.

Homodimer. Forms a heterooligomer with SRGAP1 and SRGAP3 through its F-BAR domain. Interacts (via SH3 domain) with GPHN. Interacts (via SH3 domain) with FMNL1 (activated by RAC1); regulates the actin filament severing activity of FMNL1 and actin dynamics. Interacts (via SH3 domain) with FMNL3. Interacts with RAC1; specifically stimulates RAC1 GTPase activity. Interacts (via F-BAR domain) with HOMER1. Interacts with ROBO1 and ROBO2. Interacts with FASLG. Interacts with PRMT5. In terms of processing, methylation at Arg-927 is required for the stimulation of cell migration, dimerization and localization at the plasma membrane protrusions.

It is found in the cell membrane. It localises to the cell projection. The protein resides in the dendritic spine. Its subcellular location is the postsynaptic density. The protein localises to the postsynaptic cell membrane. It is found in the lamellipodium. It localises to the cytoplasmic vesicle. The protein resides in the phagosome. Its subcellular location is the nucleus. The protein localises to the cytoplasm. It is found in the cytosol. In terms of biological role, postsynaptic RAC1 GTPase activating protein (GAP) that plays a key role in neuronal morphogenesis and migration mainly during development of the cerebral cortex. Regulates excitatory and inhibitory synapse maturation and density in cortical pyramidal neurons. SRGAP2/SRGAP2A limits excitatory and inhibitory synapse density through its RAC1-specific GTPase activating activity, while it promotes maturation of both excitatory and inhibitory synapses through its ability to bind to the postsynaptic scaffolding protein HOMER1 at excitatory synapses, and the postsynaptic protein GPHN at inhibitory synapses. Mechanistically, acts by binding and deforming membranes, thereby regulating actin dynamics to regulate cell migration and differentiation. Promotes cell repulsion and contact inhibition of locomotion: localizes to protrusions with curved edges and controls the duration of RAC1 activity in contact protrusions. In non-neuronal cells, may also play a role in cell migration by regulating the formation of lamellipodia and filopodia. This Mus musculus (Mouse) protein is SLIT-ROBO Rho GTPase-activating protein 2.